The chain runs to 395 residues: Demethylmacrocin O-methyltransferase (395 aa).

It carries out the reaction demethylmacrocin + S-adenosyl-L-methionine = macrocin + S-adenosyl-L-homocysteine + H(+). Its pathway is antibiotic biosynthesis; tylosin biosynthesis. In terms of biological role, O-methyltransferase that catalyzes the conversion of demethylmacrocin to macrocin, the penultimate step of tylosin antibiotic biosynthesis. Also able to mediate the conversion of demethyllactenocin to lactenocin. This Streptomyces fradiae (Streptomyces roseoflavus) protein is Demethylmacrocin O-methyltransferase (tylE).